The sequence spans 125 residues: Type II secretion system protein I (125 aa).

The propeptide at 1-5 (MKQQG) is leader sequence. The residue at position 6 (Met6) is an N-methylmethionine. Residues 6–26 (MTLLEVMVALVIFALAGLTVL) form a helical membrane-spanning segment.

The protein belongs to the GSP I family. In terms of assembly, type II secretion is composed of four main components: the outer membrane complex, the inner membrane complex, the cytoplasmic secretion ATPase and the periplasm-spanning pseudopilus. Interacts with core component OutG. In terms of processing, cleaved by prepilin peptidase. Post-translationally, methylated by prepilin peptidase at the amino group of the N-terminal methionine once the leader sequence is cleaved by prepilin peptidase.

It localises to the cell inner membrane. Functionally, component of the type II secretion system required for the energy-dependent secretion of extracellular factors such as proteases and toxins from the periplasm. Part of the pseudopilus tip complex that is critical for the recognition and binding of secretion substrates. The chain is Type II secretion system protein I (outI) from Dickeya chrysanthemi (Pectobacterium chrysanthemi).